Consider the following 94-residue polypeptide: Pyrimidine/purine nucleoside phosphorylase 2 (94 aa).

This sequence belongs to the nucleoside phosphorylase PpnP family.

It carries out the reaction a purine D-ribonucleoside + phosphate = a purine nucleobase + alpha-D-ribose 1-phosphate. It catalyses the reaction adenosine + phosphate = alpha-D-ribose 1-phosphate + adenine. The catalysed reaction is cytidine + phosphate = cytosine + alpha-D-ribose 1-phosphate. The enzyme catalyses guanosine + phosphate = alpha-D-ribose 1-phosphate + guanine. It carries out the reaction inosine + phosphate = alpha-D-ribose 1-phosphate + hypoxanthine. It catalyses the reaction thymidine + phosphate = 2-deoxy-alpha-D-ribose 1-phosphate + thymine. The catalysed reaction is uridine + phosphate = alpha-D-ribose 1-phosphate + uracil. The enzyme catalyses xanthosine + phosphate = alpha-D-ribose 1-phosphate + xanthine. Its function is as follows. Catalyzes the phosphorolysis of diverse nucleosides, yielding D-ribose 1-phosphate and the respective free bases. Can use uridine, adenosine, guanosine, cytidine, thymidine, inosine and xanthosine as substrates. Also catalyzes the reverse reactions. The protein is Pyrimidine/purine nucleoside phosphorylase 2 of Psychrobacter cryohalolentis (strain ATCC BAA-1226 / DSM 17306 / VKM B-2378 / K5).